The sequence spans 254 residues: Ferritin-1, chloroplastic (254 aa).

The transit peptide at M1–A47 directs the protein to the chloroplast. Residues S48 to R86 form an extension peptide (EP) region. The Ferritin-like diiron domain occupies Q87–G240. Residues E104, E139, H142, E188, and Q222 each coordinate Fe cation.

The protein belongs to the ferritin family. Oligomer of 24 subunits. There are two types of subunits: L (light) chain and H (heavy) chain. The major chain can be light or heavy, depending on the species and tissue type. The functional molecule forms a roughly spherical shell with a diameter of 12 nm and contains a central cavity into which the insoluble mineral iron core is deposited.

The protein localises to the plastid. It is found in the chloroplast. The enzyme catalyses 4 Fe(2+) + O2 + 4 H(+) = 4 Fe(3+) + 2 H2O. In terms of biological role, stores iron in a soluble, non-toxic, readily available form. Important for iron homeostasis. Has ferroxidase activity. Iron is taken up in the ferrous form and deposited as ferric hydroxides after oxidation. This Brassica napus (Rape) protein is Ferritin-1, chloroplastic (LSC30).